The primary structure comprises 624 residues: D-3-phosphoglycerate dehydrogenase 2, chloroplastic (624 aa).

The N-terminal 49 residues, 1–49 (MAFSSSCSSVKAVNSRWTSPSPSPSSRFAVLPAFLHRRYATSVKLTAIS), are a transit peptide targeting the chloroplast. Serine 71 carries the post-translational modification Phosphoserine. NAD(+) contacts are provided by residues 231 to 232 (KV), aspartate 251, 310 to 312 (VAR), and aspartate 336. The active site involves arginine 312. The active site involves glutamate 341. The active-site Proton donor is histidine 360. Residue 360-363 (HLGA) coordinates NAD(+). Residues 552–624 (LILCRQVDQP…AIEEFVFLKL (73 aa)) form the ACT domain.

It belongs to the D-isomer specific 2-hydroxyacid dehydrogenase family. Ubiquitous, but highly expressed in roots and in dark-grown leaf tissues. Expressed in the vasculature, stigma, anther filaments and shoot apical meristem. Not detected in the root meristem or in embryo.

Its subcellular location is the plastid. It localises to the chloroplast. It carries out the reaction (2R)-3-phosphoglycerate + NAD(+) = 3-phosphooxypyruvate + NADH + H(+). It functions in the pathway amino-acid biosynthesis; L-serine biosynthesis; L-serine from 3-phospho-D-glycerate: step 1/3. With respect to regulation, inhibited by 90 uM 3-phosphonooxypyruvate, but not by Ser, Thr, Val, Gly Trp, O-acetyl-L-Ser and Cys. Involved in the plastidial phosphorylated pathway of serine biosynthesis (PPSB). The protein is D-3-phosphoglycerate dehydrogenase 2, chloroplastic (PGDH2) of Arabidopsis thaliana (Mouse-ear cress).